A 478-amino-acid polypeptide reads, in one-letter code: Catalase easC (478 aa).

His54 is a catalytic residue. A heme-binding site is contributed by Tyr343. The interval 459-478 (VAEKARPDSPSRAQPGQLRL) is disordered.

Belongs to the catalase family. The cofactor is heme.

It functions in the pathway alkaloid biosynthesis; ergot alkaloid biosynthesis. Catalase; part of the gene cluster that mediates the biosynthesis of fungal ergot alkaloid. DmaW catalyzes the first step of ergot alkaloid biosynthesis by condensing dimethylallyl diphosphate (DMAP) and tryptophan to form 4-dimethylallyl-L-tryptophan. The second step is catalyzed by the methyltransferase easF that methylates 4-dimethylallyl-L-tryptophan in the presence of S-adenosyl-L-methionine, resulting in the formation of 4-dimethylallyl-L-abrine. The catalase easC and the FAD-dependent oxidoreductase easE then transform 4-dimethylallyl-L-abrine to chanoclavine-I which is further oxidized by easD in the presence of NAD(+), resulting in the formation of chanoclavine-I aldehyde. Chanoclavine-I aldehyde is the precursor of ergoamides and ergopeptines in Clavicipitaceae, and clavine-type alcaloids such as fumiclavine in Trichocomaceae. However, the metabolites downstream of chanoclavine-I aldehyde in Arthrodermataceae have not been identified yet. This chain is Catalase easC, found in Arthroderma benhamiae (strain ATCC MYA-4681 / CBS 112371) (Trichophyton mentagrophytes).